Reading from the N-terminus, the 430-residue chain is C4-dicarboxylate transport protein (430 aa).

9 consecutive transmembrane segments (helical) span residues 8–28, 44–64, 76–96, 144–164, 184–204, 222–242, 289–309, 326–346, and 352–372; these read SLYF…HFYP, LIKM…IAGM, IALL…LVIV, AFAS…GFAL, VIFG…FGAM, LIIC…GSIA, VVGL…SIYL, VIHQ…AAGV, and IVLA…LALI.

It belongs to the dicarboxylate/amino acid:cation symporter (DAACS) (TC 2.A.23) family.

Its subcellular location is the cell inner membrane. In terms of biological role, responsible for the transport of dicarboxylates such as succinate, fumarate, and malate from the periplasm across the membrane. This chain is C4-dicarboxylate transport protein, found in Yersinia enterocolitica serotype O:8 / biotype 1B (strain NCTC 13174 / 8081).